Reading from the N-terminus, the 119-residue chain is MSYFVVFAICIQACLFHNVYSQCLGRVGPGGPPLGPYGGPLGGPGYGPVGYGGCGGYGGSGIGNVAVAGELPVVGSSAVMGQVPVIGAVEFAGPACAVGSVSISGACGPTCGCGGLPYY.

Residues 1-21 (MSYFVVFAICIQACLFHNVYS) form the signal peptide. A left arm region spans residues 22 to 55 (QCLGRVGPGGPPLGPYGGPLGGPGYGPVGYGGCG). Residues 56–103 (GYGGSGIGNVAVAGELPVVGSSAVMGQVPVIGAVEFAGPACAVGSVSI) form a central domain region. The interval 104-119 (SGACGPTCGCGGLPYY) is right arm.

The protein belongs to the chorion protein family.

Its function is as follows. This protein is one of many from the eggshell of the silk moth. The protein is Chorion class CA protein ERA.3 (ERA.3) of Bombyx mori (Silk moth).